We begin with the raw amino-acid sequence, 157 residues long: Hydra actinoporin-like toxin 3 (157 aa).

The N-terminal stretch at 1–14 is a signal peptide; sequence LEATVSRNKKYKFT. The Cell attachment site signature appears at 129-131; it reads IAG.

This sequence belongs to the actinoporin family. HALT subfamily. Octamer or nonamer in membranes. Monomer in the soluble state. In vitro, interacts with folate receptor alpha (of target organism).

It is found in the nematocyst. The protein localises to the secreted. The protein resides in the target cell membrane. In terms of biological role, pore-forming protein that forms hydrophilic pores and causes cytolysis. Compared to equinatoxin-2 (AC P61914), it reveals lower cytolysis activity (5-12-fold difference, tested on erythrocytes), a larger pore size (probably 2-3 nm) and different affinity to membrane lipids (100-fold lower affinity to sphingomyelin). Binds to the two sphingolipids, lysophosphatidic acid (LPA) and sphingosine-1-phosphate (S1P). Does not bind (or only weakly) to sulfatides (SFT). Shows cytolytic activity on HeLa cells, with a different potency than its paralogs (from most potent to less potent: HALT-4&gt;HALT-6~HALT-1&gt;HALT-3&gt;HALT-7&gt;HALT-2). Pore formation is a multi-step process that involves specific recognition of membrane lipid by a protein aromatic residues rich region, firm binding to the membrane (mainly driven by hydrophobic interactions) accompanied by the transfer of the N-terminal region to the lipid-water interface and finally pore formation after oligomerization of monomers. In vitro, binds to the folate receptor alpha (FOLR1), a GPI-anchored membrane protein that plays a major role in the uptake of folate/folic acid into cells via endocytosis, suggesting a possible involvement of this receptor in the mechanism of HALT-1-induced cell lysis. In vivo, does not cause visible paralysis in larvae of the blowfly Sarcophaga faculata, the most common arthropod prey of Hydra. The chain is Hydra actinoporin-like toxin 3 from Hydra vulgaris (Hydra).